Here is a 340-residue protein sequence, read N- to C-terminus: Ferrochelatase (340 aa).

Fe cation is bound by residues H189 and E292.

This sequence belongs to the ferrochelatase family.

The protein resides in the cytoplasm. The catalysed reaction is heme b + 2 H(+) = protoporphyrin IX + Fe(2+). The protein operates within porphyrin-containing compound metabolism; protoheme biosynthesis; protoheme from protoporphyrin-IX: step 1/1. Its function is as follows. Catalyzes the ferrous insertion into protoporphyrin IX. This is Ferrochelatase from Pseudomonas aeruginosa (strain UCBPP-PA14).